Consider the following 540-residue polypeptide: MTAPSTSSASSVVPSGADTSPHVAAIHEKILIVDFGSQVTQLIARRVREEGVYSEIVPFQKAEAAFAEMKPKAVILSGGPASVLDDNAPSAPMTILEAGVPVLGICYGEQTLAKQLGGTVEGGHHREFGRAQIEITDDCALFDGIWQKGGKYDVWMSHGDRVTKLPAGFRAVAQAPGSPISVIADDTRKFYAMQFHPEVVHTPDGAKLLSNFVRKVAGLTGDWTMRAFREEAIEKIRAQVGTGKVICGLSGGVDSAVAAVLIHEAIGDQLTCVFVDHGLLRKDEGKSVVDLFRHHYNIPLVHVDVSETFLGALKGVTDPEQKRKTIGKLFIDVFEAEARRVGGADFLAQGTLYPDVIESVSFTGGPSVTIKSHHNVGGLPERMNMKLVEPLRELFKDEVRALGRELGLPDVFVGRHPFPGPGLAIRCPGEITEEKLEILRNADAVYIDQIRKAGLYDVIWQAFAVLLPVRSVGVMGDGRTYDYVVGLRAVTSTDGMTADFYPFEMSFLGATATRIINEVKGVNRVVYDVTSKPPGTIEWE.

The 194-residue stretch at 29-222 folds into the Glutamine amidotransferase type-1 domain; sequence KILIVDFGSQ…VRKVAGLTGD (194 aa). C106 acts as the Nucleophile in catalysis. Active-site residues include H196 and E198. The GMPS ATP-PPase domain occupies 223–415; that stretch reads WTMRAFREEA…LGLPDVFVGR (193 aa). 250–256 provides a ligand contact to ATP; it reads SGGVDSA.

As to quaternary structure, homodimer.

It catalyses the reaction XMP + L-glutamine + ATP + H2O = GMP + L-glutamate + AMP + diphosphate + 2 H(+). Its pathway is purine metabolism; GMP biosynthesis; GMP from XMP (L-Gln route): step 1/1. Catalyzes the synthesis of GMP from XMP. The polypeptide is GMP synthase [glutamine-hydrolyzing] (Rhodopseudomonas palustris (strain ATCC BAA-98 / CGA009)).